A 201-amino-acid chain; its full sequence is Large ribosomal subunit protein uL4 (201 aa).

The disordered stretch occupies residues 39–70 (GRQGTKAQKTRSEVSGGGKKPWRQKGTGRARA).

The protein belongs to the universal ribosomal protein uL4 family. In terms of assembly, part of the 50S ribosomal subunit.

One of the primary rRNA binding proteins, this protein initially binds near the 5'-end of the 23S rRNA. It is important during the early stages of 50S assembly. It makes multiple contacts with different domains of the 23S rRNA in the assembled 50S subunit and ribosome. In terms of biological role, forms part of the polypeptide exit tunnel. In Marinobacter nauticus (strain ATCC 700491 / DSM 11845 / VT8) (Marinobacter aquaeolei), this protein is Large ribosomal subunit protein uL4.